The primary structure comprises 201 residues: MGAYKYLEELAKKKQSDVNLFLSRVRAWEYRQMNVIHRASRPSRPDKARRLGYKAKQGYVIYRIRVRRGGRKRPVPKGQTYGKPVHQGVNHLKYQRSARCTAEERVGRYCSNLRVLNSYWVNQDATYKFFEVILVDPSHKAIRRDPRINWIVNPVHKHRESRGLTSIGKKSRGIGKGHRYNNSPQHATWLRHNTLSLRRYR.

Positions 161 to 182 are disordered; that stretch reads SRGLTSIGKKSRGIGKGHRYNN. Positions 169 to 179 are enriched in basic residues; it reads KKSRGIGKGHR. The residue at position 183 (Ser183) is a Phosphoserine.

The protein belongs to the eukaryotic ribosomal protein eL15 family. In terms of assembly, component of the large ribosomal subunit (LSU). Mature yeast ribosomes consist of a small (40S) and a large (60S) subunit. The 40S small subunit contains 1 molecule of ribosomal RNA (18S rRNA) and at least 33 different proteins. The large 60S subunit contains 3 rRNA molecules (25S, 5.8S and 5S rRNA) and at least 46 different proteins.

It localises to the cytoplasm. The protein localises to the nucleus. The protein resides in the nucleolus. Functionally, component of the ribosome, a large ribonucleoprotein complex responsible for the synthesis of proteins in the cell. The small ribosomal subunit (SSU) binds messenger RNAs (mRNAs) and translates the encoded message by selecting cognate aminoacyl-transfer RNA (tRNA) molecules. The large subunit (LSU) contains the ribosomal catalytic site termed the peptidyl transferase center (PTC), which catalyzes the formation of peptide bonds, thereby polymerizing the amino acids delivered by tRNAs into a polypeptide chain. The nascent polypeptides leave the ribosome through a tunnel in the LSU and interact with protein factors that function in enzymatic processing, targeting, and the membrane insertion of nascent chains at the exit of the ribosomal tunnel. The sequence is that of Large ribosomal subunit protein eL15B (rpl1502) from Schizosaccharomyces pombe (strain 972 / ATCC 24843) (Fission yeast).